A 339-amino-acid polypeptide reads, in one-letter code: Carboxyvinyl-carboxyphosphonate phosphorylmutase, chloroplastic (339 aa).

Residues 1–30 (MSMLMAVKTTSLCCSSLNLTASPTFRRNPR) constitute a chloroplast transit peptide.

This sequence belongs to the isocitrate lyase/PEP mutase superfamily.

It is found in the plastid. Its subcellular location is the chloroplast. The catalysed reaction is 1-carboxyvinyl carboxyphosphonate + H(+) = 3-(hydrohydroxyphosphoryl)pyruvate + CO2. The chain is Carboxyvinyl-carboxyphosphonate phosphorylmutase, chloroplastic from Arabidopsis thaliana (Mouse-ear cress).